We begin with the raw amino-acid sequence, 1035 residues long: Kinesin-like protein KIN-4A (1035 aa).

Residues serine 11–isoleucine 370 enclose the Kinesin motor domain. Residue glycine 90–threonine 97 participates in ATP binding. 3 coiled-coil regions span residues cysteine 408–arginine 436, glutamine 504–serine 707, and lysine 881–serine 911. A disordered region spans residues arginine 704–threonine 724.

Belongs to the TRAFAC class myosin-kinesin ATPase superfamily. Kinesin family. KIN-4 subfamily. As to quaternary structure, homodimer. In terms of tissue distribution, expressed in stems and flowers. Detected in cells undergoing secondary wall deposition including developing interfascicular fibers and xylem cells, but also in dividing cells and expanding/elongating parenchyma cells.

Its subcellular location is the cytoplasm. It is found in the cytoskeleton. Kinesin-like motor protein involved in the control of the oriented deposition of cellulose microfibrils. Its motor activity is directed toward the microtubule's plus end. It possesses the potential to drive long-distance transport of cargo along cortical microtubules. Regulates cell wall mechanics during cell elongation, by the regulation of primary and secondary walls deposition. Contributes to cortical microtubule-mediated trafficking of cell wall components. This Arabidopsis thaliana (Mouse-ear cress) protein is Kinesin-like protein KIN-4A.